We begin with the raw amino-acid sequence, 344 residues long: UDP-N-acetylglucosamine--N-acetylmuramyl-(pentapeptide) pyrophosphoryl-undecaprenol N-acetylglucosamine transferase (344 aa).

UDP-N-acetyl-alpha-D-glucosamine contacts are provided by residues 9–11 (TGG), Asn-118, Arg-157, Ser-188, and Gln-282.

It belongs to the glycosyltransferase 28 family. MurG subfamily.

Its subcellular location is the cell inner membrane. The enzyme catalyses di-trans,octa-cis-undecaprenyl diphospho-N-acetyl-alpha-D-muramoyl-L-alanyl-D-glutamyl-meso-2,6-diaminopimeloyl-D-alanyl-D-alanine + UDP-N-acetyl-alpha-D-glucosamine = di-trans,octa-cis-undecaprenyl diphospho-[N-acetyl-alpha-D-glucosaminyl-(1-&gt;4)]-N-acetyl-alpha-D-muramoyl-L-alanyl-D-glutamyl-meso-2,6-diaminopimeloyl-D-alanyl-D-alanine + UDP + H(+). It participates in cell wall biogenesis; peptidoglycan biosynthesis. Cell wall formation. Catalyzes the transfer of a GlcNAc subunit on undecaprenyl-pyrophosphoryl-MurNAc-pentapeptide (lipid intermediate I) to form undecaprenyl-pyrophosphoryl-MurNAc-(pentapeptide)GlcNAc (lipid intermediate II). In Aquifex aeolicus (strain VF5), this protein is UDP-N-acetylglucosamine--N-acetylmuramyl-(pentapeptide) pyrophosphoryl-undecaprenol N-acetylglucosamine transferase.